The chain runs to 257 residues: Triosephosphate isomerase (257 aa).

9 to 11 (NWK) contacts substrate. The active-site Electrophile is the His97. Glu169 functions as the Proton acceptor in the catalytic mechanism. Substrate is bound by residues Gly175, Ser214, and 235–236 (GG).

It belongs to the triosephosphate isomerase family. Homodimer.

It is found in the cytoplasm. The catalysed reaction is D-glyceraldehyde 3-phosphate = dihydroxyacetone phosphate. Its pathway is carbohydrate biosynthesis; gluconeogenesis. It functions in the pathway carbohydrate degradation; glycolysis; D-glyceraldehyde 3-phosphate from glycerone phosphate: step 1/1. Involved in the gluconeogenesis. Catalyzes stereospecifically the conversion of dihydroxyacetone phosphate (DHAP) to D-glyceraldehyde-3-phosphate (G3P). In Vibrio cholerae serotype O1 (strain ATCC 39315 / El Tor Inaba N16961), this protein is Triosephosphate isomerase.